A 59-amino-acid chain; its full sequence is Temporin-HN2 (59 aa).

Positions 1 to 22 (MFTLKKSLLLLLFLGTINLSLS) are cleaved as a signal peptide. Residues 16–44 (TINLSLSEQERDAKEERRDEMDVEVEKRN) are a coiled coil. A propeptide spanning residues 23–41 (EQERDAKEERRDEMDVEVE) is cleaved from the precursor. The residue at position 57 (Leu-57) is a Leucine amide.

In terms of tissue distribution, expressed by the skin glands.

The protein localises to the secreted. Has antimicrobial activity against some Gram-positive bacteria and fungi but has no activity against a range of Gram-negative bacteria except P.faecalis. Active against the Gram-positive bacteria S.aureus ATCC 25923 (MIC=4.8 uM), S.carnosus KHS (MIC=19 uM), B.licheniformis X39 (MIC=19 uM) and R.rhodochrous X15 (MIC=2.4 uM) but is inactive against E.faecium 091299 and E.faecalis 981. Has a less potent antimicrobial activity against the Gram-negative bacterium P.faecalis X29 (MIC=37.5 uM) and is inactive against E.coli, P.aeruginosa and S.typhi. Has antifungal activity against C.albicans ATCC 2002 (MIC=9.5 uM) and is also active against the slime mold 090223 (MIC=9.5 uM). Has extremely low hemolytic activity against human erythrocytes (LC(50)=300 uM). This Odorrana hainanensis (Odor frog) protein is Temporin-HN2.